We begin with the raw amino-acid sequence, 1088 residues long: RNA-directed RNA polymerase (1088 aa).

One can recognise a RdRp catalytic domain in the interval 501–687; it reads LSYGDVTRFL…AKRYIAGGKI (187 aa).

This sequence belongs to the reoviridae RNA-directed RNA polymerase family. Interacts with VP3 (Potential). Interacts with VP2; this interaction activates VP1. Interacts with NSP5; this interaction is probably necessary for the formation of functional virus factories. Interacts with NSP2; this interaction is weak. The cofactor is Mg(2+).

Its subcellular location is the virion. The enzyme catalyses RNA(n) + a ribonucleoside 5'-triphosphate = RNA(n+1) + diphosphate. Functionally, RNA-directed RNA polymerase that is involved in both transcription and genome replication. Together with VP3 capping enzyme, forms an enzyme complex positioned near the channels situated at each of the five-fold vertices of the core. Following infection, the outermost layer of the virus is lost, leaving a double-layered particle (DLP) made up of the core and VP6 shell. VP1 then catalyzes the transcription of fully conservative plus-strand genomic RNAs that are extruded through the DLP's channels into the cytoplasm where they function as mRNAs for translation of viral proteins. One copy of each of the viral (+)RNAs is also recruited during core assembly, together with newly synthesized polymerase complexes and VP2. The polymerase of these novo-formed particles catalyzes the synthesis of complementary minus-strands leading to dsRNA formation. To do so, the polymerase specifically recognizes and binds 4 bases 5'-UGUG-3' in the conserved 3'-sequence of plus-strand RNA templates. VP2 presumably activates the autoinhibited VP1-RNA complex to coordinate packaging and genome replication. Once dsRNA synthesis is complete, the polymerase switches to the transcriptional mode, thus providing secondary transcription. The polypeptide is RNA-directed RNA polymerase (Homo sapiens (Human)).